We begin with the raw amino-acid sequence, 257 residues long: Snake venom serine proteinase 11 (257 aa).

Residues 1–18 (MVLIRVLANLLILQLSYA) form the signal peptide. The propeptide occupies 19–24 (QKSSEL). The 224-residue stretch at 25-248 (VVGGDECNIN…YTEWIQSIIT (224 aa)) folds into the Peptidase S1 domain. 6 disulfides stabilise this stretch: C31–C162, C49–C65, C97–C255, C141–C209, C173–C188, and C199–C224. Catalysis depends on charge relay system residues H64 and D109. N120 carries N-linked (GlcNAc...) asparagine glycosylation. S203 acts as the Charge relay system in catalysis.

It belongs to the peptidase S1 family. Snake venom subfamily. As to quaternary structure, monomer. As to expression, expressed by the venom gland.

The protein localises to the secreted. Its function is as follows. Snake venom serine protease that may act in the hemostasis system of the prey. In Crotalus adamanteus (Eastern diamondback rattlesnake), this protein is Snake venom serine proteinase 11.